Consider the following 65-residue polypeptide: DNA gyrase inhibitor YacG (65 aa).

Zn(2+) is bound by residues Cys-9, Cys-12, Cys-28, and Cys-32. Residues 43–65 (EEKRIPSQSENSDSDDWSGQPEQ) are disordered.

The protein belongs to the DNA gyrase inhibitor YacG family. As to quaternary structure, interacts with GyrB. It depends on Zn(2+) as a cofactor.

In terms of biological role, inhibits all the catalytic activities of DNA gyrase by preventing its interaction with DNA. Acts by binding directly to the C-terminal domain of GyrB, which probably disrupts DNA binding by the gyrase. In Photorhabdus laumondii subsp. laumondii (strain DSM 15139 / CIP 105565 / TT01) (Photorhabdus luminescens subsp. laumondii), this protein is DNA gyrase inhibitor YacG.